Consider the following 153-residue polypeptide: Endoribonuclease YbeY (153 aa).

Residues His-114, His-118, and His-124 each coordinate Zn(2+).

It belongs to the endoribonuclease YbeY family. The cofactor is Zn(2+).

The protein localises to the cytoplasm. Its function is as follows. Single strand-specific metallo-endoribonuclease involved in late-stage 70S ribosome quality control and in maturation of the 3' terminus of the 16S rRNA. This chain is Endoribonuclease YbeY, found in Shewanella baltica (strain OS195).